The sequence spans 72 residues: Antitoxin VapB11 (72 aa).

Its function is as follows. Antitoxin component of a type II toxin-antitoxin (TA) system. The sequence is that of Antitoxin VapB11 (vapB11) from Mycobacterium tuberculosis (strain CDC 1551 / Oshkosh).